The following is a 94-amino-acid chain: uncharacterized protein (94 aa).

This is an uncharacterized protein from Haemophilus influenzae (strain ATCC 51907 / DSM 11121 / KW20 / Rd).